The following is a 144-amino-acid chain: Large ribosomal subunit protein uL16 (144 aa).

Belongs to the universal ribosomal protein uL16 family. Part of the 50S ribosomal subunit.

Binds 23S rRNA and is also seen to make contacts with the A and possibly P site tRNAs. This chain is Large ribosomal subunit protein uL16, found in Heliobacterium modesticaldum (strain ATCC 51547 / Ice1).